The chain runs to 312 residues: HPr kinase/phosphorylase (312 aa).

Catalysis depends on residues His139 and Lys160. 154–161 (GSSGVGKS) provides a ligand contact to ATP. Ser161 is a Mg(2+) binding site. The active-site Proton acceptor; for phosphorylation activity. Proton donor; for dephosphorylation activity is Asp178. The interval 202-211 (LEIRGLGIIN) is important for the catalytic mechanism of both phosphorylation and dephosphorylation. A Mg(2+)-binding site is contributed by Glu203. Arg244 is an active-site residue. Residues 265-270 (PVRPGR) form an important for the catalytic mechanism of dephosphorylation region.

Belongs to the HPrK/P family. As to quaternary structure, homohexamer. It depends on Mg(2+) as a cofactor.

It catalyses the reaction [HPr protein]-L-serine + ATP = [HPr protein]-O-phospho-L-serine + ADP + H(+). The enzyme catalyses [HPr protein]-O-phospho-L-serine + phosphate + H(+) = [HPr protein]-L-serine + diphosphate. Its function is as follows. Catalyzes the ATP- as well as the pyrophosphate-dependent phosphorylation of a specific serine residue in HPr, a phosphocarrier protein of the phosphoenolpyruvate-dependent sugar phosphotransferase system (PTS). HprK/P also catalyzes the pyrophosphate-producing, inorganic phosphate-dependent dephosphorylation (phosphorolysis) of seryl-phosphorylated HPr (P-Ser-HPr). The two antagonistic activities of HprK/P are regulated by several intracellular metabolites, which change their concentration in response to the absence or presence of rapidly metabolisable carbon sources (glucose, fructose, etc.) in the growth medium. Therefore, by controlling the phosphorylation state of HPr, HPrK/P is a sensor enzyme that plays a major role in the regulation of carbon metabolism and sugar transport: it mediates carbon catabolite repression (CCR), and regulates PTS-catalyzed carbohydrate uptake and inducer exclusion. In Listeria innocua serovar 6a (strain ATCC BAA-680 / CLIP 11262), this protein is HPr kinase/phosphorylase.